Here is a 229-residue protein sequence, read N- to C-terminus: NAD(P)H-quinone oxidoreductase subunit K, chloroplastic (229 aa).

Residues cysteine 43, cysteine 44, cysteine 108, and cysteine 139 each contribute to the [4Fe-4S] cluster site.

It belongs to the complex I 20 kDa subunit family. As to quaternary structure, NDH is composed of at least 16 different subunits, 5 of which are encoded in the nucleus. It depends on [4Fe-4S] cluster as a cofactor.

The protein localises to the plastid. Its subcellular location is the chloroplast thylakoid membrane. The enzyme catalyses a plastoquinone + NADH + (n+1) H(+)(in) = a plastoquinol + NAD(+) + n H(+)(out). It carries out the reaction a plastoquinone + NADPH + (n+1) H(+)(in) = a plastoquinol + NADP(+) + n H(+)(out). NDH shuttles electrons from NAD(P)H:plastoquinone, via FMN and iron-sulfur (Fe-S) centers, to quinones in the photosynthetic chain and possibly in a chloroplast respiratory chain. The immediate electron acceptor for the enzyme in this species is believed to be plastoquinone. Couples the redox reaction to proton translocation, and thus conserves the redox energy in a proton gradient. This Piper cenocladum (Ant piper) protein is NAD(P)H-quinone oxidoreductase subunit K, chloroplastic.